The following is a 195-amino-acid chain: MSSKEQNTPDEQVSQESEMEQGQQAEAAPETVDVVDPRDERIAELEAALSQAQQREHDSVLRAKAEMENVRRRSEQDVEKAHKFALERFAGELLPVIDNLERALDMSDKANAELASTIEGIELTLKSLLDAVRKFGLDVVGDTHVPFNPEVHQAMTMLESDEHEPNQVMMVMQKGYTLNGRLIRPAMVAVSKAKS.

The segment covering 1 to 24 (MSSKEQNTPDEQVSQESEMEQGQQ) has biased composition (polar residues). The tract at residues 1 to 40 (MSSKEQNTPDEQVSQESEMEQGQQAEAAPETVDVVDPRDE) is disordered.

Belongs to the GrpE family. In terms of assembly, homodimer.

It is found in the cytoplasm. Participates actively in the response to hyperosmotic and heat shock by preventing the aggregation of stress-denatured proteins, in association with DnaK and GrpE. It is the nucleotide exchange factor for DnaK and may function as a thermosensor. Unfolded proteins bind initially to DnaJ; upon interaction with the DnaJ-bound protein, DnaK hydrolyzes its bound ATP, resulting in the formation of a stable complex. GrpE releases ADP from DnaK; ATP binding to DnaK triggers the release of the substrate protein, thus completing the reaction cycle. Several rounds of ATP-dependent interactions between DnaJ, DnaK and GrpE are required for fully efficient folding. The protein is Protein GrpE of Sodalis glossinidius (strain morsitans).